Reading from the N-terminus, the 439-residue chain is Xaa-Pro dipeptidase (439 aa).

Mn(2+)-binding residues include D244, D255, H335, E380, and E419.

This sequence belongs to the peptidase M24B family. Bacterial-type prolidase subfamily. Mn(2+) is required as a cofactor.

It catalyses the reaction Xaa-L-Pro dipeptide + H2O = an L-alpha-amino acid + L-proline. Its function is as follows. Splits dipeptides with a prolyl residue in the C-terminal position. This is Xaa-Pro dipeptidase from Shewanella amazonensis (strain ATCC BAA-1098 / SB2B).